We begin with the raw amino-acid sequence, 805 residues long: Phenylalanine--tRNA ligase beta subunit (805 aa).

Residues 40 to 162 (FKNPDYLQLG…NRDEFGDYLS (123 aa)) form the tRNA-binding domain. The region spanning 412–486 (AFNRKIYLNF…KILDLNKIKE (75 aa)) is the B5 domain. Residues aspartate 464, aspartate 470, glutamate 473, and glutamate 474 each coordinate Mg(2+).

This sequence belongs to the phenylalanyl-tRNA synthetase beta subunit family. Type 1 subfamily. Tetramer of two alpha and two beta subunits. It depends on Mg(2+) as a cofactor.

It is found in the cytoplasm. The enzyme catalyses tRNA(Phe) + L-phenylalanine + ATP = L-phenylalanyl-tRNA(Phe) + AMP + diphosphate + H(+). The sequence is that of Phenylalanine--tRNA ligase beta subunit (pheT) from Mycoplasma pneumoniae (strain ATCC 29342 / M129 / Subtype 1) (Mycoplasmoides pneumoniae).